The following is a 206-amino-acid chain: uncharacterized protein (206 aa).

This is an uncharacterized protein from Saccharomyces cerevisiae (strain ATCC 204508 / S288c) (Baker's yeast).